The primary structure comprises 388 residues: MSLSACAELSRCFAAAASAKPNSGKSNSTAATSLVISSPIGHDGAVSSVSRSRKTSRIVAEASQGLTYRDAGVDIDAGAELVRRIAKMAPGIGGFGGLYPLGDSYLVAGTDGVGTKLMLAFETGIHDTIGIDLVAMSVNDIVTSGAKPLFFLDYFATGRLDVDVAEKVVKGIVDGCKQSDCVLLGGETAEMPGLYKEGEYDLSGCAVGIVKKDSVINGKNIVAGDVIIGLPSSGVHSNGFSLVRRVLAQSGLSLKDQLPGSNITLAEALMAPTVIYVKQVLDLISKGGVKGIAHITGGGFTDNIPRVFPEGLGALIYDGSWEVPAVFRWLQEAGKIEDSEMRRTFNMGIGMILVVSPEAANRILENKGQADKFYRIGEIISGNGVTFS.

It belongs to the AIR synthase family.

The protein localises to the plastid. It localises to the chloroplast. It is found in the mitochondrion. It catalyses the reaction 2-formamido-N(1)-(5-O-phospho-beta-D-ribosyl)acetamidine + ATP = 5-amino-1-(5-phospho-beta-D-ribosyl)imidazole + ADP + phosphate + H(+). It participates in purine metabolism; IMP biosynthesis via de novo pathway; 5-amino-1-(5-phospho-D-ribosyl)imidazole from N(2)-formyl-N(1)-(5-phospho-D-ribosyl)glycinamide: step 2/2. This is Phosphoribosylformylglycinamidine cyclo-ligase, chloroplastic/mitochondrial (PUR5) from Vigna unguiculata (Cowpea).